A 3637-amino-acid polypeptide reads, in one-letter code: Replicase polyprotein 1ab (3637 aa).

The C4-type; atypical zinc finger occupies 8–28; that stretch reads CLCTPNARVFWERGQVYCTRC. The 113-residue stretch at 69-181 folds into the Peptidase C31 domain; it reads ECRPGGMCWL…KGLCPFADAR (113 aa). A PCP1-alpha region spans residues 69 to 183; the sequence is ECRPGGMCWL…LCPFADARAN (115 aa). Catalysis depends on for Nsp1-alpha papain-like cysteine proteinase activity residues Cys-76 and His-147. The segment at 262–380 is PCP1-beta; sequence RDTKFSKCWE…KFRFQTRKYY (119 aa). The Peptidase C32 domain occupies 262–381; that stretch reads RDTKFSKCWE…FRFQTRKYYG (120 aa). Residues Cys-269 and His-340 each act as for Nsp1-beta papain-like cysteine proteinase activity in the active site. A Peptidase C33 domain is found at 381-486; it reads GYSPPGDGAC…RGVCGECEMG (106 aa). Active-site for Nsp2 cysteine proteinase activity residues include Cys-390 and His-456. Disordered stretches follow at residues 676–743 and 865–899; these read CKPK…AALK and QQKTSGGCGEREFKDVGRKSGAERTPSKRDLGVSL. The span at 678 to 689 shows a compositional bias: basic residues; that stretch reads PKRKRSRKKKTR. Composition is skewed to basic and acidic residues over residues 714–727 and 873–895; these read DTRETCASEKKAEK and GEREFKDVGRKSGAERTPSKRDL. The next 7 membrane-spanning stretches (helical) occupy residues 940–960, 981–1001, 1083–1103, 1287–1307, 1362–1382, 1390–1410, and 1423–1443; these read WLNHQVFVLSSHLLAVWSFIF, VLLCFYLPAIGFMTLVGCVFG, FYFLRLMVLLDLGLVFLAVAL, IADFVCLGLYVLLNFLLSAWL, ALMVAIMATVAIFFAKISLLV, CLLMYAFPSLSIAAFGFPFVL, and VQFFLLAVNVWAGVASVVVLI. The tract at residues 979-1103 is HD1; sequence CCVLLCFYLP…LGLVFLAVAL (125 aa). The tract at residues 1287-1446 is HD2; the sequence is IADFVCLGLY…ASVVVLISSW (160 aa). Residues 1511-1712 enclose the Peptidase S32 domain; it reads GSLRTRGCAK…AVVESLPALE (202 aa). Residues His-1549, Asp-1574, and Ser-1626 each act as charge relay system; for 3C-like serine proteinase activity in the active site. The next 5 membrane-spanning stretches (helical) occupy residues 1735–1755, 1761–1781, 1801–1821, 1824–1844, and 1853–1873; these read DVPVIRIAFFFLNEILPVMLA, FALSLFFCVHWLFCSSVAVAF, LVIAALNRPCGPFGFSLLGQL, CCLMLCLLDIELQLLGCLYLG, and EIFFHPTGQFMFLPLFLSLFK. The tract at residues 1735–1872 is HD3; it reads DVPVIRIAFF…MFLPLFLSLF (138 aa). One can recognise a NiRAN domain in the interval 2214–2372; that stretch reads SLNGLQQASA…LPYKLHPVRG (159 aa). The RdRp catalytic domain maps to 2611–2745; that stretch reads GRCLEADLAS…YDESSELPNY (135 aa). The AV ZBD domain maps to 2865–2928; sequence KKKCRTCAHC…SPVMSLNTEL (64 aa). Residues Cys-2871, Cys-2874, Cys-2884, Cys-2889, His-2892, His-2894, His-2896, His-2898, Cys-2905, His-2907, Cys-2914, and Cys-2917 each contribute to the Zn(2+) site. In terms of domain architecture, (+)RNA virus helicase ATP-binding spans 2985–3137; it reads QVMKVAQTCA…AFALMLGRQL (153 aa). 3013-3020 lines the ATP pocket; the sequence is GAPGTGKT. A (+)RNA virus helicase C-terminal domain is found at 3138–3269; it reads IEVFRFGPSI…CGEQPMMISE (132 aa). The AV-Nsp11N/CoV-Nsp15M domain maps to 3293–3389; sequence EGTASPLPQV…LTKFLKGKPV (97 aa). A NendoU domain is found at 3391 to 3513; sequence LPDSLMSTGR…MVWKDATAYF (123 aa). Residues His-3422, His-3437, and Lys-3466 contribute to the active site.

The protein belongs to the arteriviridae polyprotein family. In terms of processing, specific enzymatic cleavages in vivo by its own proteases yield mature proteins. There are two alternative pathways for processing. Either nsp4-5 is cleaved, which represents the major pathway or the nsp5-6 and nsp6-7 are processed, which represents the minor pathway. The major pathway occurs when nsp2 acts as a cofactor for nsp4.

Its subcellular location is the host membrane. The protein localises to the host cytoplasm. It is found in the host perinuclear region. The enzyme catalyses RNA(n) + a ribonucleoside 5'-triphosphate = RNA(n+1) + diphosphate. It catalyses the reaction ATP + H2O = ADP + phosphate + H(+). It carries out the reaction uridylyl-uridylyl-ribonucleotide-RNA = a 3'-end uridylyl-2',3'-cyclophospho-uridine-RNA + a 5'-end dephospho-ribonucleoside-RNA. Functionally, the replicase polyprotein 1ab is a multifunctional protein: it contains the activities necessary for the transcription of negative stranded RNA, leader RNA, subgenomic mRNAs and progeny virion RNA as well as proteinases responsible for the cleavage of the polyprotein into functional products. Its function is as follows. The Nsp1 chain is essential for viral subgenomic mRNA synthesis. The 3C-like serine proteinase chain is responsible for the majority of cleavages as it cleaves the C-terminus of the polyprotein. In terms of biological role, the helicase chain, which contains a zinc finger structure, displays RNA and DNA duplex-unwinding activities with 5' to 3' polarity. Functionally, plays a role in viral transcription/replication and prevents the simultaneous activation of host cell dsRNA sensors, such as MDA5/IFIH1, OAS, and PKR. Acts by degrading the 5'-polyuridines generated during replication of the poly(A) region of viral genomic and subgenomic RNAs. Catalyzes a two-step reaction in which a 2'3'-cyclic phosphate (2'3'-cP) is first generated by 2'-O transesterification, which is then hydrolyzed to a 3'-phosphate (3'-P). If not degraded, poly(U) RNA would hybridize with poly(A) RNA tails and activate host dsRNA sensors. The chain is Replicase polyprotein 1ab (rep) from Mus musculus domesticus (western European house mouse).